A 478-amino-acid chain; its full sequence is Chromosomal replication initiator protein DnaA (478 aa).

The domain I, interacts with DnaA modulators stretch occupies residues 1 to 90 (MSVELWQQCV…KRSSAPRAVQ (90 aa)). The tract at residues 91 to 141 (PASPPPAVVQAAPVAIEEASAARTVDAQPVAPATVRTERSVQVEGGLKHTS) is domain II. A domain III, AAA+ region region spans residues 142 to 358 (YLNRAFTFEN…GALKRVIAHS (217 aa)). Gly-186, Gly-188, Lys-189, and Thr-190 together coordinate ATP. Positions 359 to 478 (HFTNHPITIE…YKNLLRTLTT (120 aa)) are domain IV, binds dsDNA.

The protein belongs to the DnaA family. Oligomerizes as a right-handed, spiral filament on DNA at oriC.

The protein resides in the cytoplasm. Its function is as follows. Plays an essential role in the initiation and regulation of chromosomal replication. ATP-DnaA binds to the origin of replication (oriC) to initiate formation of the DNA replication initiation complex once per cell cycle. Binds the DnaA box (a 9 base pair repeat at the origin) and separates the double-stranded (ds)DNA. Forms a right-handed helical filament on oriC DNA; dsDNA binds to the exterior of the filament while single-stranded (ss)DNA is stabiized in the filament's interior. The ATP-DnaA-oriC complex binds and stabilizes one strand of the AT-rich DNA unwinding element (DUE), permitting loading of DNA polymerase. After initiation quickly degrades to an ADP-DnaA complex that is not apt for DNA replication. Binds acidic phospholipids. The protein is Chromosomal replication initiator protein DnaA of Azotobacter vinelandii (strain DJ / ATCC BAA-1303).